The primary structure comprises 216 residues: Nucleoside triphosphate pyrophosphatase (216 aa).

The active-site Proton acceptor is the D82.

It belongs to the Maf family. Requires a divalent metal cation as cofactor.

The protein localises to the cytoplasm. The enzyme catalyses a ribonucleoside 5'-triphosphate + H2O = a ribonucleoside 5'-phosphate + diphosphate + H(+). It catalyses the reaction a 2'-deoxyribonucleoside 5'-triphosphate + H2O = a 2'-deoxyribonucleoside 5'-phosphate + diphosphate + H(+). Nucleoside triphosphate pyrophosphatase. May have a dual role in cell division arrest and in preventing the incorporation of modified nucleotides into cellular nucleic acids. In Mycobacterium ulcerans (strain Agy99), this protein is Nucleoside triphosphate pyrophosphatase.